Reading from the N-terminus, the 143-residue chain is Large-conductance mechanosensitive channel (143 aa).

2 helical membrane passes run 10–30 (FAVK…GAFS) and 89–109 (GSFI…FLMV).

The protein belongs to the MscL family. As to quaternary structure, homopentamer.

The protein resides in the cell inner membrane. In terms of biological role, channel that opens in response to stretch forces in the membrane lipid bilayer. May participate in the regulation of osmotic pressure changes within the cell. This chain is Large-conductance mechanosensitive channel, found in Burkholderia vietnamiensis (strain G4 / LMG 22486) (Burkholderia cepacia (strain R1808)).